Reading from the N-terminus, the 337-residue chain is Protein XAP5 CIRCADIAN TIMEKEEPER (337 aa).

Serine 2 carries the N-acetylserine modification. Coiled coils occupy residues 13–41 and 72–121; these read QDAV…KSAS and TREE…GSSR. Residues 23 to 37 are compositionally biased toward basic and acidic residues; sequence KQREAERKKIQELKS. Residues 23–47 form a disordered region; the sequence is KQREAERKKIQELKSKSASGNDQSG. Residues 38-47 are compositionally biased toward polar residues; the sequence is KSASGNDQSG. Positions 125–174 are disordered; it reads AEDFENGSDEDDGENKSSGTGNLRCGKLGKDPSVETNFLPDSEREAEEQA. Acidic residues predominate over residues 126 to 137; that stretch reads EDFENGSDEDDG. At serine 132 the chain carries Phosphoserine. Residues 165 to 174 are compositionally biased toward basic and acidic residues; sequence DSEREAEEQA.

It belongs to the FAM50 family. In terms of tissue distribution, expressed in leaves stems, flowers, roots, trichomes and hypocotyls.

Its subcellular location is the nucleus. Its function is as follows. Involved in light regulation of the circadian clock and photomorphogenesis. May play a global role in coordinating growth in response to the light environment. Acts as a light quality sensor directing both negative and positive transcriptional regulation. Inhibits growth in red light but promote growth in blue light. Inhibits clock gene expression in diurnal cycles. Plays no role in the control of flowering time. In Arabidopsis thaliana (Mouse-ear cress), this protein is Protein XAP5 CIRCADIAN TIMEKEEPER (XCT).